The following is a 497-amino-acid chain: Cytochrome P450 3A18 (497 aa).

Cys442 is a binding site for heme.

The protein belongs to the cytochrome P450 family. The cofactor is heme.

The protein resides in the endoplasmic reticulum membrane. It localises to the microsome membrane. It catalyses the reaction an organic molecule + reduced [NADPH--hemoprotein reductase] + O2 = an alcohol + oxidized [NADPH--hemoprotein reductase] + H2O + H(+). Functionally, catalyzes 16-beta- and 6-alpha-hydroxylations of testosterone. The polypeptide is Cytochrome P450 3A18 (Cyp3a18) (Rattus norvegicus (Rat)).